The primary structure comprises 394 residues: SVGFKAGVKDYRLTYYTPEYETLATDILAAFRVTPQPGVPPEEAGAAVAAESSTGTWTTVWTDGLTSLDRYKGRCYHIEPVAGEENQYIAYVAYPLDLFEEGSVTNMFTSIVGNVFGFKALRALRLEDLRIPPAYSKTFQGPPHGIQVERDKLNKYGRPLLGCTIKPKLGLSAKNYGRAVYECLRGGLDFTKDDENVNSQPFMRWRDRFLFCAEAIYKAQAETGEIKGHYLNATAGTSEEMMKRAACARELGVPIVMHDYLTGGFTANTSLSHYCRDNGLLLHIHRAMHAVIDRQKNHGIHFRVLAKALRMSGGDHIHSGTVVGKLEGERDVTLGFVDLLRDDFIEKDRSRGIYFTQDWVSMPGVLPVASGGIHVWHMPALTEIFGDDSVLQFG.

At K5 the chain carries N6,N6,N6-trimethyllysine. Substrate contacts are provided by N114 and T164. The Proton acceptor role is filled by K166. K168 is a binding site for substrate. Residues K192, D194, and E195 each coordinate Mg(2+). K192 carries the N6-carboxylysine modification. The active-site Proton acceptor is H285. Substrate-binding residues include R286, H318, and S370.

It belongs to the RuBisCO large chain family. Type I subfamily. Heterohexadecamer of 8 large chains and 8 small chains. Requires Mg(2+) as cofactor.

It is found in the plastid. It localises to the chloroplast. The enzyme catalyses 2 (2R)-3-phosphoglycerate + 2 H(+) = D-ribulose 1,5-bisphosphate + CO2 + H2O. It catalyses the reaction D-ribulose 1,5-bisphosphate + O2 = 2-phosphoglycolate + (2R)-3-phosphoglycerate + 2 H(+). Its function is as follows. RuBisCO catalyzes two reactions: the carboxylation of D-ribulose 1,5-bisphosphate, the primary event in carbon dioxide fixation, as well as the oxidative fragmentation of the pentose substrate in the photorespiration process. Both reactions occur simultaneously and in competition at the same active site. The polypeptide is Ribulose bisphosphate carboxylase large chain (rbcL) (Cabomba caroliniana (Carolina fanwort)).